The sequence spans 112 residues: MTALTQMKCEACQADAPKVTDEELAELIRMIPDWGVQVRDGIMQLERVYKFKNFKLAMAFTNKLAELAEEEFHHPGILTEWGKVTVTWWSHSIKGLHKNDFIMAAKTDLLLD.

Belongs to the pterin-4-alpha-carbinolamine dehydratase family.

It carries out the reaction (4aS,6R)-4a-hydroxy-L-erythro-5,6,7,8-tetrahydrobiopterin = (6R)-L-erythro-6,7-dihydrobiopterin + H2O. This Shewanella oneidensis (strain ATCC 700550 / JCM 31522 / CIP 106686 / LMG 19005 / NCIMB 14063 / MR-1) protein is Putative pterin-4-alpha-carbinolamine dehydratase.